Here is a 338-residue protein sequence, read N- to C-terminus: Glyceraldehyde-3-phosphate dehydrogenase, cytosolic (338 aa).

The interval 2–153 is binding to NAD; sequence ADKKIKIGIN…YKSDLNIVSN (152 aa). NAD(+) contacts are provided by residues 15 to 16 and D37; that span reads RI. Residues 56–75 are external loop; that stretch reads GQWKHNELKVKDEKTLLFGE. R84 provides a ligand contact to NAD(+). Residues 154-338 are catalytic; it reads ASCTTNCLAP…VDLIIHMSKA (185 aa). D-glyceraldehyde 3-phosphate is bound at residue 155 to 157; that stretch reads SCT. C156 serves as the catalytic Nucleophile. S-nitrosocysteine is present on residues C156 and C160. Positions 183–206 are S-loop; it reads HSITATQKTVDGPSMKDWRGGRAA. Residues T186, 215–216, and R238 each bind D-glyceraldehyde 3-phosphate; that span reads TG. N320 lines the NAD(+) pocket.

Belongs to the glyceraldehyde-3-phosphate dehydrogenase family. Homotetramer.

The protein resides in the cytoplasm. The catalysed reaction is D-glyceraldehyde 3-phosphate + phosphate + NAD(+) = (2R)-3-phospho-glyceroyl phosphate + NADH + H(+). It functions in the pathway carbohydrate degradation; glycolysis; pyruvate from D-glyceraldehyde 3-phosphate: step 1/5. Its function is as follows. Key enzyme in glycolysis that catalyzes the first step of the pathway by converting D-glyceraldehyde 3-phosphate (G3P) into 3-phospho-D-glyceroyl phosphate. Essential for the maintenance of cellular ATP levels and carbohydrate metabolism. The protein is Glyceraldehyde-3-phosphate dehydrogenase, cytosolic (GAPC) of Sinapis alba (White mustard).